Consider the following 1744-residue polypeptide: Myotubularin-related protein 5 (1744 aa).

Residues 14–150 form the uDENN domain; it reads DTVAVIVLEE…IRFLTYELVE (137 aa). Residues 165 to 304 form the cDENN domain; that stretch reads ELGFELIPIS…YYNSLHQRLR (140 aa). The dDENN domain maps to 306–412; that stretch reads VMFTTTSQED…LTRALPRRKH (107 aa). Residues 787-871 form the GRAM domain; the sequence is KGNFDPVLAH…LYSMESFKKL (85 aa). Residues 996–1447 enclose the Myotubularin phosphatase domain; the sequence is NAHIRYAVID…PQIHMWPFLA (452 aa). Polar residues predominate over residues 1102-1116; sequence TGSMTGSQQTLHSKA. Residues 1102 to 1123 form a disordered region; the sequence is TGSMTGSQQTLHSKASSNEESS. Residues 1540–1590 form a Phorbol-ester/DAG-type zinc finger; sequence IHELTPFTVGARPVQCCYCTNILTRWSKAVHCKKCRIHVHEGCVNRNITIG. The region spanning 1643–1743 is the PH domain; the sequence is PPLCTGYLSK…WKECIEQVIR (101 aa).

It belongs to the protein-tyrosine phosphatase family. Non-receptor class myotubularin subfamily.

In terms of biological role, probably acts as an adapter for other myotubularin-like phosphatases. This is Myotubularin-related protein 5 from Caenorhabditis elegans.